We begin with the raw amino-acid sequence, 1037 residues long: Glycine dehydrogenase (decarboxylating) 1, mitochondrial (1037 aa).

The transit peptide at 1-67 directs the protein to the mitochondrion; the sequence is MERARRLAYR…AFGRHQQTRS (67 aa). An S-glutathionyl cysteine; transient modification is found at C98. Residues C402 and C463 each carry the S-glutathionyl cysteine modification. K774 is subject to N6-(pyridoxal phosphate)lysine. 3 positions are modified to S-glutathionyl cysteine; transient: C777, C943, and C1022.

Belongs to the GcvP family. As to quaternary structure, homodimer. The glycine cleavage system is composed of four proteins: P, T, L and H. The cofactor is pyridoxal 5'-phosphate. Post-translationally, glutathionylated at Cys-98, Cys-777, Cys-943 and Cys-1022 after S-nitrosoglutathione treatment. S-nitrosylated at unknown positions by nitric oxide. Expressed in leaves. Detected in roots, stems, flowers and siliques.

Its subcellular location is the mitochondrion. It carries out the reaction N(6)-[(R)-lipoyl]-L-lysyl-[glycine-cleavage complex H protein] + glycine + H(+) = N(6)-[(R)-S(8)-aminomethyldihydrolipoyl]-L-lysyl-[glycine-cleavage complex H protein] + CO2. With respect to regulation, inhibited by harpin, S-nitrosoglutathione (GSNO), nitric oxide, N-ethylmaleimide and 5,5'-dithiobis-(2-nitrobenzoic acid). In terms of biological role, the glycine decarboxylase (GDC) or glycine cleavage system catalyzes the degradation of glycine. The P protein binds the alpha-amino group of glycine through its pyridoxal phosphate cofactor; CO(2) is released and the remaining methylamine moiety is then transferred to the lipoamide cofactor of the H protein. In Arabidopsis thaliana (Mouse-ear cress), this protein is Glycine dehydrogenase (decarboxylating) 1, mitochondrial (GLDP1).